Here is a 286-residue protein sequence, read N- to C-terminus: NAD kinase (286 aa).

Asp74 (proton acceptor) is an active-site residue. NAD(+)-binding positions include 74–75 (DG), 148–149 (ND), Asp178, Ala186, 189–194 (TAYNLS), and Gln244.

It belongs to the NAD kinase family. It depends on a divalent metal cation as a cofactor.

The protein localises to the cytoplasm. The catalysed reaction is NAD(+) + ATP = ADP + NADP(+) + H(+). Its function is as follows. Involved in the regulation of the intracellular balance of NAD and NADP, and is a key enzyme in the biosynthesis of NADP. Catalyzes specifically the phosphorylation on 2'-hydroxyl of the adenosine moiety of NAD to yield NADP. The chain is NAD kinase from Campylobacter jejuni (strain RM1221).